The chain runs to 160 residues: Transcription elongation factor GreA (160 aa).

Residues Glu12–Ser76 adopt a coiled-coil conformation.

Belongs to the GreA/GreB family.

Its function is as follows. Necessary for efficient RNA polymerase transcription elongation past template-encoded arresting sites. The arresting sites in DNA have the property of trapping a certain fraction of elongating RNA polymerases that pass through, resulting in locked ternary complexes. Cleavage of the nascent transcript by cleavage factors such as GreA or GreB allows the resumption of elongation from the new 3'terminus. GreA releases sequences of 2 to 3 nucleotides. The protein is Transcription elongation factor GreA of Clostridium botulinum (strain Kyoto / Type A2).